The sequence spans 348 residues: Putative [LysW]-L-2-aminoadipate/[LysW]-L-glutamate phosphate reductase (348 aa).

Position 9 to 12 (9 to 12) interacts with NADP(+); sequence SGYV. Cysteine 149 is a catalytic residue. Residue asparagine 315 coordinates NADP(+).

This sequence belongs to the NAGSA dehydrogenase family. Type 1 subfamily. LysY sub-subfamily.

It localises to the cytoplasm. It catalyses the reaction [amino-group carrier protein]-C-terminal-N-(1-carboxy-5-oxopentan-1-yl)-L-glutamine + phosphate + NADP(+) = [amino-group carrier protein]-C-terminal-N-(1-carboxy-5-phosphooxy-5-oxopentan-1-yl)-L-glutamine + NADPH + H(+). The enzyme catalyses [amino-group carrier protein]-C-terminal-gamma-(L-glutamyl-5-semialdehyde)-L-glutamate + phosphate + NADP(+) = [amino-group carrier protein]-C-terminal-gamma-(5-phospho-L-glutamyl)-L-glutamate + NADPH + H(+). It participates in amino-acid biosynthesis; L-lysine biosynthesis via AAA pathway; L-lysine from L-alpha-aminoadipate (Thermus route): step 3/5. It functions in the pathway amino-acid biosynthesis; L-arginine biosynthesis. Functionally, involved in both the arginine and lysine biosynthetic pathways. The sequence is that of Putative [LysW]-L-2-aminoadipate/[LysW]-L-glutamate phosphate reductase from Nitrosopumilus maritimus (strain SCM1).